The following is a 749-amino-acid chain: Subtilisin-like protease SBT4.14 (749 aa).

A signal peptide spans 1–28 (MIRSKCSCHHHLLVLVMVVLWISPRYAS). Residues 29-115 (AEDEHAKDFY…VSRNQYRKLH (87 aa)) constitute a propeptide, activation peptide. One can recognise an Inhibitor I9 domain in the interval 38–115 (YIIYLGDRPD…VSRNQYRKLH (78 aa)). A Peptidase S8 domain is found at 119–595 (SWDFVGLPLT…GGQINPRRAA (477 aa)). Catalysis depends on Asp-145, which acts as the Charge relay system. A glycan (N-linked (GlcNAc...) asparagine) is linked at Asn-176. His-210 serves as the catalytic Charge relay system. N-linked (GlcNAc...) asparagine glycans are attached at residues Asn-225, Asn-233, Asn-446, and Asn-458. Ser-536 (charge relay system) is an active-site residue. A glycan (N-linked (GlcNAc...) asparagine) is linked at Asn-618.

This sequence belongs to the peptidase S8 family. In terms of processing, the C-terminal propeptide is autocleaved. As to expression, expressed only in roots, particularly in xylem.

This Arabidopsis thaliana (Mouse-ear cress) protein is Subtilisin-like protease SBT4.14.